A 306-amino-acid chain; its full sequence is 4-hydroxy-3-methylbut-2-enyl diphosphate reductase 1 (306 aa).

[4Fe-4S] cluster is bound at residue cysteine 10. (2E)-4-hydroxy-3-methylbut-2-enyl diphosphate contacts are provided by histidine 39 and histidine 72. Dimethylallyl diphosphate contacts are provided by histidine 39 and histidine 72. Residues histidine 39 and histidine 72 each contribute to the isopentenyl diphosphate site. Cysteine 94 contacts [4Fe-4S] cluster. Histidine 122 is a (2E)-4-hydroxy-3-methylbut-2-enyl diphosphate binding site. Histidine 122 contacts dimethylallyl diphosphate. Histidine 122 serves as a coordination point for isopentenyl diphosphate. The active-site Proton donor is the glutamate 124. Residue threonine 162 coordinates (2E)-4-hydroxy-3-methylbut-2-enyl diphosphate. [4Fe-4S] cluster is bound at residue cysteine 192. The (2E)-4-hydroxy-3-methylbut-2-enyl diphosphate site is built by serine 220, serine 221, asparagine 222, and serine 264. Dimethylallyl diphosphate is bound by residues serine 220, serine 221, asparagine 222, and serine 264. Isopentenyl diphosphate is bound by residues serine 220, serine 221, asparagine 222, and serine 264.

Belongs to the IspH family. [4Fe-4S] cluster serves as cofactor.

It catalyses the reaction isopentenyl diphosphate + 2 oxidized [2Fe-2S]-[ferredoxin] + H2O = (2E)-4-hydroxy-3-methylbut-2-enyl diphosphate + 2 reduced [2Fe-2S]-[ferredoxin] + 2 H(+). The catalysed reaction is dimethylallyl diphosphate + 2 oxidized [2Fe-2S]-[ferredoxin] + H2O = (2E)-4-hydroxy-3-methylbut-2-enyl diphosphate + 2 reduced [2Fe-2S]-[ferredoxin] + 2 H(+). It functions in the pathway isoprenoid biosynthesis; dimethylallyl diphosphate biosynthesis; dimethylallyl diphosphate from (2E)-4-hydroxy-3-methylbutenyl diphosphate: step 1/1. It participates in isoprenoid biosynthesis; isopentenyl diphosphate biosynthesis via DXP pathway; isopentenyl diphosphate from 1-deoxy-D-xylulose 5-phosphate: step 6/6. In terms of biological role, catalyzes the conversion of 1-hydroxy-2-methyl-2-(E)-butenyl 4-diphosphate (HMBPP) into a mixture of isopentenyl diphosphate (IPP) and dimethylallyl diphosphate (DMAPP). Acts in the terminal step of the DOXP/MEP pathway for isoprenoid precursor biosynthesis. In Rhodopseudomonas palustris (strain ATCC BAA-98 / CGA009), this protein is 4-hydroxy-3-methylbut-2-enyl diphosphate reductase 1.